The sequence spans 662 residues: Leucine aminopeptidase 2 (662 aa).

A peptide contacts are provided by residues 178-180 and 304-309; these read QLE and PYGGME. Position 333 (H333) interacts with Zn(2+). The Proton acceptor role is filled by E334. Zn(2+)-binding residues include H337 and E356. Y422 (proton donor) is an active-site residue.

Belongs to the peptidase M1 family. Zn(2+) serves as cofactor.

Its subcellular location is the cytoplasm. It localises to the nucleus. The enzyme catalyses an epoxide + H2O = an ethanediol. Functionally, aminopeptidase that preferentially cleaves di- and tripeptides. Also has low epoxide hydrolase activity (in vitro). Can hydrolyze the epoxide leukotriene LTA(4) but it forms preferentially 5,6-dihydroxy-7,9,11,14-eicosatetraenoic acid rather than the cytokine leukotriene B(4) as the product compared to the homologous mammalian enzyme (in vitro). This is Leucine aminopeptidase 2 from Kluyveromyces lactis (strain ATCC 8585 / CBS 2359 / DSM 70799 / NBRC 1267 / NRRL Y-1140 / WM37) (Yeast).